The primary structure comprises 94 residues: Small ribosomal subunit protein uS19 (94 aa).

Residues 73 to 94 (EFSPTRRFGGHADKKSKKGQVK) are disordered.

This sequence belongs to the universal ribosomal protein uS19 family.

Protein S19 forms a complex with S13 that binds strongly to the 16S ribosomal RNA. The polypeptide is Small ribosomal subunit protein uS19 (Kosmotoga olearia (strain ATCC BAA-1733 / DSM 21960 / TBF 19.5.1)).